The following is a 372-amino-acid chain: NAD(P)H-quinone oxidoreductase subunit 1 (372 aa).

Helical transmembrane passes span 27-47 (IIWL…GVLV), 97-117 (ILFT…WLIV), 128-148 (VGIG…GLLM), 176-196 (LALS…IDIV), 204-224 (ILSW…ICAL), 266-286 (ILSA…PIPV), 308-328 (SIGI…AILL), and 347-367 (FLLP…LALP).

It belongs to the complex I subunit 1 family. NDH-1 is composed of at least 11 different subunits.

It localises to the cellular thylakoid membrane. It carries out the reaction a plastoquinone + NADH + (n+1) H(+)(in) = a plastoquinol + NAD(+) + n H(+)(out). It catalyses the reaction a plastoquinone + NADPH + (n+1) H(+)(in) = a plastoquinol + NADP(+) + n H(+)(out). Functionally, NDH-1 shuttles electrons from an unknown electron donor, via FMN and iron-sulfur (Fe-S) centers, to quinones in the respiratory and/or the photosynthetic chain. The immediate electron acceptor for the enzyme in this species is believed to be plastoquinone. Couples the redox reaction to proton translocation, and thus conserves the redox energy in a proton gradient. The sequence is that of NAD(P)H-quinone oxidoreductase subunit 1 from Prochlorococcus marinus (strain MIT 9515).